The chain runs to 547 residues: MAAKDVKFSQDARDRMLRGVDILANAVKVTLGPKGRNVLIERSFGAPRITKDGVTVAKEIQLEDKFENMGAQMLREVASKTNDLAGDGTTTATVLAQSIVREGAKAVAAGMNPMDLKRGIEIAVAAVVKDIEKRAKPVASSAEIAQVGTISSNGDAAIGKMIAQAMQKVGNEGVITVEENKSLTTEVDIVEGMKFDRGYLSPYFVTNAEKMAVEFDDAYVLLHEKKVSGLQSMLPLLEAVVQAGKPLVIIAEDVEGEALATLVVNRLRGGLKVAAVKAPGFGDRRKAMMEDIAILTGGQLISDDLGMKLENVTLKMLGRAKKVVIDKENTTIVGGAGKKADIESRVGQIKAQIEETSSDYDREKLQERLAKLAGGVAVIRVGGATEVEVKEKKDRVEDALNATRAAVQEGIVPGGGVALLRAKKAVGRINNDNADVQAGINIVLKALEAPIRQIAENAGVEGSIVVGKILENKSETFGFDAQTEEYVDMLAKGIVDPAKVVRTALQDAASVSALLVTTEAMVAELPRDAAPAMPGGGGMGGMGGMGF.

Residues 30-33 (TLGP), K51, 87-91 (DGTTT), G415, and D496 each bind ATP.

This sequence belongs to the chaperonin (HSP60) family. As to quaternary structure, forms a cylinder of 14 subunits composed of two heptameric rings stacked back-to-back. Interacts with the co-chaperonin GroES.

It is found in the cytoplasm. It carries out the reaction ATP + H2O + a folded polypeptide = ADP + phosphate + an unfolded polypeptide.. In terms of biological role, together with its co-chaperonin GroES, plays an essential role in assisting protein folding. The GroEL-GroES system forms a nano-cage that allows encapsulation of the non-native substrate proteins and provides a physical environment optimized to promote and accelerate protein folding. The protein is Chaperonin GroEL 1 of Rhodopseudomonas palustris (strain BisA53).